Here is a 429-residue protein sequence, read N- to C-terminus: Adenylosuccinate synthetase (429 aa).

GTP-binding positions include 12-18 and 40-42; these read GDEGKGK and GHT. D13 (proton acceptor) is an active-site residue. Positions 13 and 40 each coordinate Mg(2+). IMP is bound by residues 13–16, 38–41, T129, R143, Q223, T238, and R302; these read DEGK and NAGH. The active-site Proton donor is H41. 298–304 lines the substrate pocket; it reads TVTGRPR. Residues R304, 330–332, and 412–414 contribute to the GTP site; these read KLD and STS.

This sequence belongs to the adenylosuccinate synthetase family. In terms of assembly, homodimer. Mg(2+) is required as a cofactor.

Its subcellular location is the cytoplasm. The enzyme catalyses IMP + L-aspartate + GTP = N(6)-(1,2-dicarboxyethyl)-AMP + GDP + phosphate + 2 H(+). It functions in the pathway purine metabolism; AMP biosynthesis via de novo pathway; AMP from IMP: step 1/2. In terms of biological role, plays an important role in the de novo pathway of purine nucleotide biosynthesis. Catalyzes the first committed step in the biosynthesis of AMP from IMP. This is Adenylosuccinate synthetase from Rhodospirillum rubrum (strain ATCC 11170 / ATH 1.1.1 / DSM 467 / LMG 4362 / NCIMB 8255 / S1).